We begin with the raw amino-acid sequence, 667 residues long: Bifunctional polymyxin resistance protein ArnA (667 aa).

The formyltransferase ArnAFT stretch occupies residues 1–304; it reads MKAIVFAYHD…EMGIVTDVRL (304 aa). H104 serves as the catalytic Proton donor; for formyltransferase activity. (6R)-10-formyltetrahydrofolate contacts are provided by residues R114 and 136–140; that span reads VKKAD. The tract at residues 314-667 is dehydrogenase ArnADH; it reads RRTRVLILGV…TAAPKDELNA (354 aa). Residues D347 and 368 to 369 contribute to the NAD(+) site; that span reads DI. UDP-alpha-D-glucuronate is bound by residues A393, Y398, and 432–433; that span reads TS. E434 serves as the catalytic Proton acceptor; for decarboxylase activity. UDP-alpha-D-glucuronate-binding positions include R460, N492, 526–535, and Y613; that span reads KLVDGGAQKR. R619 functions as the Proton donor; for decarboxylase activity in the catalytic mechanism.

This sequence in the N-terminal section; belongs to the Fmt family. UDP-L-Ara4N formyltransferase subfamily. The protein in the C-terminal section; belongs to the NAD(P)-dependent epimerase/dehydratase family. UDP-glucuronic acid decarboxylase subfamily. As to quaternary structure, homohexamer, formed by a dimer of trimers.

It carries out the reaction UDP-alpha-D-glucuronate + NAD(+) = UDP-beta-L-threo-pentopyranos-4-ulose + CO2 + NADH. The enzyme catalyses UDP-4-amino-4-deoxy-beta-L-arabinose + (6R)-10-formyltetrahydrofolate = UDP-4-deoxy-4-formamido-beta-L-arabinose + (6S)-5,6,7,8-tetrahydrofolate + H(+). Its pathway is nucleotide-sugar biosynthesis; UDP-4-deoxy-4-formamido-beta-L-arabinose biosynthesis; UDP-4-deoxy-4-formamido-beta-L-arabinose from UDP-alpha-D-glucuronate: step 1/3. The protein operates within nucleotide-sugar biosynthesis; UDP-4-deoxy-4-formamido-beta-L-arabinose biosynthesis; UDP-4-deoxy-4-formamido-beta-L-arabinose from UDP-alpha-D-glucuronate: step 3/3. It participates in bacterial outer membrane biogenesis; lipopolysaccharide biosynthesis. Functionally, bifunctional enzyme that catalyzes the oxidative decarboxylation of UDP-glucuronic acid (UDP-GlcUA) to UDP-4-keto-arabinose (UDP-Ara4O) and the addition of a formyl group to UDP-4-amino-4-deoxy-L-arabinose (UDP-L-Ara4N) to form UDP-L-4-formamido-arabinose (UDP-L-Ara4FN). The modified arabinose is attached to lipid A and is required for resistance to polymyxin and cationic antimicrobial peptides. The sequence is that of Bifunctional polymyxin resistance protein ArnA from Yersinia pseudotuberculosis serotype IB (strain PB1/+).